The following is a 287-amino-acid chain: Eukaryotic translation initiation factor 3 subunit F (287 aa).

One can recognise an MPN domain in the interval 12 to 142; sequence VRVHPVVLFQ…IKAYVCVSLG (131 aa).

This sequence belongs to the eIF-3 subunit F family. In terms of assembly, component of the eukaryotic translation initiation factor 3 (eIF-3) complex.

The protein localises to the cytoplasm. In terms of biological role, component of the eukaryotic translation initiation factor 3 (eIF-3) complex, which is involved in protein synthesis of a specialized repertoire of mRNAs and, together with other initiation factors, stimulates binding of mRNA and methionyl-tRNAi to the 40S ribosome. The eIF-3 complex specifically targets and initiates translation of a subset of mRNAs involved in cell proliferation. In Aedes aegypti (Yellowfever mosquito), this protein is Eukaryotic translation initiation factor 3 subunit F.